The following is a 782-amino-acid chain: Ribosome biogenesis protein ERB1 (782 aa).

2 disordered regions span residues 1-123 (MGSK…RIEK) and 339-361 (PEEY…EDRE). Residues 35–86 (SEDEEDYLPSDDDDDVEDSENEGTGASEDDDDDDDDDDILSDDIPSDVDSEE) are compositionally biased toward acidic residues. Over residues 105–123 (VDPKREEDDGADRNYRIEK) the composition is skewed to basic and acidic residues. WD repeat units follow at residues 433-472 (GHEG…QVWS), 476-516 (NSEE…VTPA), 567-609 (TVRS…TQIP), 612-650 (KLSG…LVKV), 653-692 (PGAK…RPYK), 696-736 (FHGQ…DQLE), and 752-782 (VSKL…RLWM).

The protein belongs to the WD repeat BOP1/ERB1 family. In terms of assembly, component of the NOP7 complex, composed of ERB1, NOP7 and YTM1. The complex is held together by ERB1, which interacts with NOP7 via its N-terminal domain and with YTM1 via a high-affinity interaction between the seven-bladed beta-propeller domains of the 2 proteins. The NOP7 complex associates with the 66S pre-ribosome.

The protein resides in the nucleus. It is found in the nucleolus. The protein localises to the nucleoplasm. In terms of biological role, component of the NOP7 complex, which is required for maturation of the 25S and 5.8S ribosomal RNAs and formation of the 60S ribosome. In Chaetomium globosum (strain ATCC 6205 / CBS 148.51 / DSM 1962 / NBRC 6347 / NRRL 1970) (Soil fungus), this protein is Ribosome biogenesis protein ERB1.